Here is a 530-residue protein sequence, read N- to C-terminus: MARAGWTSPVPLCVCLLLTCGFAEAGKLLVVPMDGSHWFTMQSVVEKLILRGHEVVVVMPEVSWQLERSLNCTVKTYSTSYTLEDQNREFMVFAHAQWKAQAQSIFSLLMSSSSGFLDLFFSHCRSLFNDRKLVEYLKESSFDAVFLDPFDTCGLIVAKYFSLPSVVFTRGIFCHHLEEGAQCPAPLSYVPNDLLGFSDAMTFKERVWNHIVHLEDHLFCQYLFRNALEIASEILQTPVTAYDLYSHTSIWLLRTDFVLDYPKPVMPNMIFIGGINCHQGKPLPMEFEAYINASGEHGIVVFSLGSMVSEIPEKKAMAIADALGKIPQTVLWRYTGTRPSNLANNTILVKWLPQNDLLGHPMTRAFITHAGSHGVYESICNGVPMVMMPLFGDQMDNAKRMETKGAGVTLNVLEMTSEDLENALKAVINDKSYKENIMRLSSLHKDRPVEPLDLAVFWVEFVMRHKGAPHLRPAAHDLTWYQYHSLDVIGFLLAVVLTVAFITFKCCAYGYRKCLGKKGRVKKAHKSKTH.

A signal peptide spans 1 to 25 (MARAGWTSPVPLCVCLLLTCGFAEA). N-linked (GlcNAc...) asparagine glycosylation is found at Asn71, Asn292, and Asn344. A helical transmembrane segment spans residues 488-504 (VIGFLLAVVLTVAFITF).

It belongs to the UDP-glycosyltransferase family. Homodimer. Homooligomer. Interacts with UGT1A1, UGT1A3, UGT1A4, UGT1A6, UGT1A7, UGT1A8 and UGT1A9 to form heterodimers. Isoform 1 interacts with isoform 2/i2 suggesting that oligomerization is involved in negative regulation of transferase activity by isoform 2. Isoform 1 also interacts with respective i2 isoforms of UGT1A1, UGT1A3, UGT1A4, UGT1A6, UGT1A7, UGT1A8 and UGT1A9. Liver and colon. Isoform 1 and isoform 2 are expressed in colon, esophagus and small intestine; isoform 2 but not isoform 1 is expressed in liver or kidney.

It localises to the endoplasmic reticulum membrane. The catalysed reaction is glucuronate acceptor + UDP-alpha-D-glucuronate = acceptor beta-D-glucuronoside + UDP + H(+). It catalyses the reaction 17beta-estradiol + UDP-alpha-D-glucuronate = 17beta-estradiol 3-O-(beta-D-glucuronate) + UDP + H(+). The enzyme catalyses 17beta-estradiol + UDP-alpha-D-glucuronate = 17beta-estradiol 17-O-(beta-D-glucuronate) + UDP + H(+). It carries out the reaction 17alpha-estradiol + UDP-alpha-D-glucuronate = 17alpha-estradiol 3-O-(beta-D-glucuronate) + UDP + H(+). The catalysed reaction is 16alpha,17beta-estriol + UDP-alpha-D-glucuronate = 16alpha,17beta-estriol 3-O-(beta-D-glucuronate) + UDP + H(+). It catalyses the reaction 16beta,17beta-estriol + UDP-alpha-D-glucuronate = 16beta,17beta-estriol 3-O-(beta-D-glucuronate) + UDP + H(+). The enzyme catalyses 16alpha,17alpha-estriol + UDP-alpha-D-glucuronate = 16alpha,17alpha-estriol 3-O-(beta-D-glucuronate) + UDP + H(+). It carries out the reaction 16alpha-hydroxyestrone + UDP-alpha-D-glucuronate = 16alpha-hydroxyestrone 3-O-(beta-D-glucuronate) + UDP + H(+). The catalysed reaction is estrone + UDP-alpha-D-glucuronate = estrone 3-O-(beta-D-glucuronate) + UDP + H(+). It catalyses the reaction prunetin + UDP-alpha-D-glucuronate = prunetin-4'-O-beta-D-glucuronide + UDP. The enzyme catalyses (5Z,8Z,11Z,14Z)-eicosatetraenoate + UDP-alpha-D-glucuronate = O-[(5Z),(8Z),(11Z),(14Z)-eicosatetraenoyl]-beta-D-glucuronate + UDP. It carries out the reaction 15-hydroxy-(5Z,8Z,11Z,13E)-eicosatetraenoate + UDP-alpha-D-glucuronate = 15-O-(beta-D-glucuronosyl)-(5Z,8Z,11Z,14Z)-eicosatetraenoate + UDP + H(+). The catalysed reaction is prostaglandin B1 + UDP-alpha-D-glucuronate = 15-O-(beta-D-glucuronosyl)-prostaglandin B1 + UDP + H(+). It catalyses the reaction (E)-ferulate + UDP-alpha-D-glucuronate = (E)-4-O-(beta-D-glucuronosyl)-ferulate + UDP + H(+). The enzyme catalyses (E)-ferulate + UDP-alpha-D-glucuronate = (E)-ferulic acid beta-D-glucuronate ester + UDP. It carries out the reaction losartan + UDP-alpha-D-glucuronate = losartan-2-N-beta-D-glucuronide + UDP. The catalysed reaction is candesartan + UDP-alpha-D-glucuronate = candesartan O-beta-D-glucuronoside + UDP. It catalyses the reaction candesartan + UDP-alpha-D-glucuronate = candesartan-2-N-beta-D-glucuronide + UDP. The enzyme catalyses zolasartan + UDP-alpha-D-glucuronate = zolarsartan-1-N-beta-D-glucuronide + UDP. UDP-glucuronosyltransferase (UGT) that catalyzes phase II biotransformation reactions in which lipophilic substrates are conjugated with glucuronic acid to increase the metabolite's water solubility, thereby facilitating excretion into either the urine or bile. Essential for the elimination and detoxification of drugs, xenobiotics and endogenous compounds. Catalyzes the glucuronidation of endogenous estrogen hormones such as estradiol, estrone and estriol. Involved in the glucuronidation of arachidonic acid (AA) and AA-derived eicosanoids including 15-HETE and PGB1. Involved in the glucuronidation of the phytochemical ferulic acid at the phenolic or the carboxylic acid group. Also catalyzes the glucuronidation of the isoflavones genistein, daidzein, glycitein, formononetin, biochanin A and prunetin, which are phytoestrogens with anticancer and cardiovascular properties. Involved in the glucuronidation of the AGTR1 angiotensin receptor antagonist losartan, caderastan and zolarsatan, drugs which can inhibit the effect of angiotensin II. In terms of biological role, lacks UGT glucuronidation activity but acts as a negative regulator of isoform 1. In Homo sapiens (Human), this protein is UDP-glucuronosyltransferase 1A10.